The following is a 120-amino-acid chain: Glycine cleavage system H protein (120 aa).

Residues 17–99 (IATVGITSHA…QGAGWLYRMR (83 aa)) enclose the Lipoyl-binding domain. An N6-lipoyllysine modification is found at Lys58.

Belongs to the GcvH family. In terms of assembly, the glycine cleavage system is composed of four proteins: P, T, L and H. (R)-lipoate serves as cofactor.

The glycine cleavage system catalyzes the degradation of glycine. The H protein shuttles the methylamine group of glycine from the P protein to the T protein. This is Glycine cleavage system H protein from Methylobacterium nodulans (strain LMG 21967 / CNCM I-2342 / ORS 2060).